The chain runs to 267 residues: 3-methyl-2-oxobutanoate hydroxymethyltransferase (267 aa).

Residues D45 and D84 each contribute to the Mg(2+) site. 3-methyl-2-oxobutanoate-binding positions include 45–46, D84, and K113; that span reads DS. E115 is a binding site for Mg(2+). E182 serves as the catalytic Proton acceptor.

This sequence belongs to the PanB family. As to quaternary structure, homodecamer; pentamer of dimers. Mg(2+) serves as cofactor.

The protein localises to the cytoplasm. The enzyme catalyses 3-methyl-2-oxobutanoate + (6R)-5,10-methylene-5,6,7,8-tetrahydrofolate + H2O = 2-dehydropantoate + (6S)-5,6,7,8-tetrahydrofolate. It functions in the pathway cofactor biosynthesis; coenzyme A biosynthesis. In terms of biological role, catalyzes the reversible reaction in which hydroxymethyl group from 5,10-methylenetetrahydrofolate is transferred onto alpha-ketoisovalerate to form ketopantoate. The chain is 3-methyl-2-oxobutanoate hydroxymethyltransferase from Saccharolobus islandicus (strain M.16.27) (Sulfolobus islandicus).